The sequence spans 214 residues: tRNA (guanine-N(7)-)-methyltransferase (214 aa).

Residues glutamate 44, aspartate 69, aspartate 96, and aspartate 118 each coordinate S-adenosyl-L-methionine. Aspartate 118 is an active-site residue. Lysine 122 serves as a coordination point for substrate. Residues lysine 124 to arginine 129 form an interaction with RNA region. Substrate contacts are provided by residues aspartate 154 and threonine 191 to glutamate 194.

The protein belongs to the class I-like SAM-binding methyltransferase superfamily. TrmB family.

It catalyses the reaction guanosine(46) in tRNA + S-adenosyl-L-methionine = N(7)-methylguanosine(46) in tRNA + S-adenosyl-L-homocysteine. It participates in tRNA modification; N(7)-methylguanine-tRNA biosynthesis. Its function is as follows. Catalyzes the formation of N(7)-methylguanine at position 46 (m7G46) in tRNA. The protein is tRNA (guanine-N(7)-)-methyltransferase of Enterococcus faecalis (strain ATCC 700802 / V583).